A 143-amino-acid polypeptide reads, in one-letter code: Histone H2B.2, sperm (143 aa).

The segment at Met-1–Arg-49 is disordered. 5 short sequence motifs (SPKK motif) span residues Ser-4 to Lys-7, Ser-9 to Lys-12, Ser-14 to Lys-17, Ser-19 to Lys-22, and Ser-24 to Arg-27. A compositionally biased stretch (basic residues) spans Ser-9–Arg-49. Ser-14, Ser-19, and Ser-24 each carry phosphoserine. O-linked (GlcNAc) serine glycosylation occurs at Ser-129. Lys-137 is covalently cross-linked (Glycyl lysine isopeptide (Lys-Gly) (interchain with G-Cter in ubiquitin)).

It belongs to the histone H2B family. As to quaternary structure, the nucleosome is a histone octamer containing two molecules each of H2A, H2B, H3 and H4 assembled in one H3-H4 heterotetramer and two H2A-H2B heterodimers. The octamer wraps approximately 147 bp of DNA. Post-translationally, monoubiquitination of Lys-137 gives a specific tag for epigenetic transcriptional activation and is also prerequisite for histone H3 'Lys-4' and 'Lys-79' methylation. In terms of processing, phosphorylated on SPKK motifs 3, 4 and 5; which may regulate DNA binding. Dephosphorylated during maturation of spermatids to mature sperm and rephosphorylated at fertilization. GlcNAcylation at Ser-129 promotes monoubiquitination of Lys-137. It fluctuates in response to extracellular glucose, and associates with transcribed genes.

The protein resides in the nucleus. It is found in the chromosome. Functionally, core component of nucleosome. Nucleosomes wrap and compact DNA into chromatin, limiting DNA accessibility to the cellular machineries which require DNA as a template. Histones thereby play a central role in transcription regulation, DNA repair, DNA replication and chromosomal stability. DNA accessibility is regulated via a complex set of post-translational modifications of histones, also called histone code, and nucleosome remodeling. The sequence is that of Histone H2B.2, sperm from Psammechinus miliaris (Green sea urchin).